The following is a 1553-amino-acid chain: MSEQTPAEAGAAGAREDACRDYQSSLEDLTFNSKPHINMLTILAEENLPFAKEIVSLIEAQTAKAPSSEKLPVMYLMDSIVKNVGREYLTAFTKNLVATFICVFEKVDENTRKSLFKLRSTWDEIFPLKKLYALDVRVNSLDPAWPIKPLPPNVNTSSIHVNPKFLNKSPDEPSTPGTVVSSPSISTPPIVPDIQKNLTQEQLIRQQLLAKQKQLLELQQKKLELELEQAKAQLAVSLSVQQETANLGPGSVPSKLHVPQIPTMAVKTPHQVPVQPDKSRAGPSLQMQDLKGTNRDPRLNRMSQHSSHGKEQSHRKEFVMNTINQSDIKTSKNVPSEKLNSSKQEKSKSGERITKKELDQLDSKSKSKSKSPSPLKNKLSHTKDLKNQDSESMRLSDMSKRDPRLKKHLQDKAEGKDEDVKEKRKTAEKKEKDEHMKSSEHRVIGSRSKIINGIVQKQDMVTEELEKQGTKPGRSSTRKRSRSRSPKSRSPIIHSPKRRDRRSPKRRQRSMSPNLAPKAGKMRQSGLKQSHMEEFPPPSREERNIKRSAKQDVRDPRRLKKMDEDRPQETAGQHSMKSGGDPKENIENWQSSKSAKRWKSGWEENKSLQQGDEHSKPPHLRHRESWSSTKGILSPRAPKQQHRLSVDANLQIPKELTLASKRELLQKTSERLASGEITQDEFLVVVHQIRQLFQYQEGVREEQRSPFNDRFPLKRPRYEDSDKPFVDGPASRFAGLDTNQRLTALAEDRPLFDGPGRPSVTRDGPAKMIFEGPNKLSPRIDGPPTPGSLRFDGSPGQMGGGGPMRFEGPQGQLGGGCPLRFEGPPGPVGTPLRFEGPIGQGGGGGFRFEGSPSLRFEGSTGGLRFEGPGGQPVGGLRFEGHRGQPVGGLRFEGPHGQPVGSLRFDNPRGQPVGGLRFEGGHGPSGAAIRFDGPHGQPGGGGGIRFEGPLLQQGVGMRFEGPHGQSVAGLRFEGHNQLGGNLRFEGPHGQPGVGIRFEGPIVQQGGGMRFEGPVPGGGLRIEGPLGQGGPRFEGCHSLRFDGQPGQPSLLPRFDGLHGQPGPRFERTGQPGPQRFDGPPGQQVQPRFDGVPQRFDGPQHQQASRFDIPLGLQGTRFDNHPSQRIESFNHSGPYNDPPGNTFNVPSQGLQFQRHEQIFDTPQGPNFNGPHGPGNQNFPNPINRASGHYFDEKNLQSSQFGNFGNLPTPISVGNIQASQQVLTGVAQPVAFGQGQQFLPVHPQNPGAFIQNPSGGLPKAYPDNHLSQVDVNELFSKLLKTGILKLSQPDSATAQVTEAVAQPPPEEDEDQNEDQDVPDLTNFTIEELKQRYDSVINRLYTGIQCYSCGMRFTTSQTDVYADHLDWHYRQNRTEKDVSRKVTHRRWYYSLTDWIEFEEIADLEERAKSQFFEKVHEEVVLKTQEAAKEKEFQSVPAGPAGAVESCEICQEQFEQYWDEEEEEWHLKNAIRVDGKIYHPSCYEDYQNTSSFDCTPSPSKTPVENPLNIMLNIVKNELQEPCESPKVKEEQIDAPPACSEESVATPTEIKTESDTVESV.

An N-acetylserine modification is found at serine 2. One can recognise a CID domain in the interval 14-142; that stretch reads AREDACRDYQ…ALDVRVNSLD (129 aa). Serine 120 carries the post-translational modification Phosphoserine. Phosphothreonine is present on threonine 121. Residues 167-186 form a disordered region; that stretch reads NKSPDEPSTPGTVVSSPSIS. Residues serine 169 and serine 182 each carry the phosphoserine modification. A compositionally biased stretch (low complexity) spans 174–186; that stretch reads STPGTVVSSPSIS. Residues 208–235 adopt a coiled-coil conformation; the sequence is LLAKQKQLLELQQKKLELELEQAKAQLA. Residues 265-648 are disordered; that stretch reads AVKTPHQVPV…KQQHRLSVDA (384 aa). A Glycyl lysine isopeptide (Lys-Gly) (interchain with G-Cter in SUMO2) cross-link involves residue lysine 291. Positions 308–318 are enriched in basic and acidic residues; that stretch reads HGKEQSHRKEF. Residues 321-342 show a composition bias toward polar residues; sequence NTINQSDIKTSKNVPSEKLNSS. Residue lysine 329 forms a Glycyl lysine isopeptide (Lys-Gly) (interchain with G-Cter in SUMO2) linkage. 3 stretches are compositionally biased toward basic and acidic residues: residues 343-365, 381-422, and 428-443; these read KQEK…DSKS, HTKD…DVKE, and EKKE…EHRV. Residue lysine 457 forms a Glycyl lysine isopeptide (Lys-Gly) (interchain with G-Cter in SUMO2) linkage. Residues 476–487 are compositionally biased toward basic residues; that stretch reads STRKRSRSRSPK. A phosphoserine mark is found at serine 490, serine 495, serine 510, and serine 512. The span at 495 to 509 shows a compositional bias: basic residues; that stretch reads SPKRRDRRSPKRRQR. 2 stretches are compositionally biased toward basic and acidic residues: residues 530 to 568 and 600 to 616; these read SHME…DRPQ and SGWE…EHSK. The residue at position 645 (serine 645) is a Phosphoserine. Lysine 654 participates in a covalent cross-link: Glycyl lysine isopeptide (Lys-Gly) (interchain with G-Cter in SUMO2). Serine 705 is modified (phosphoserine). Residues 707–733 form a disordered region; sequence FNDRFPLKRPRYEDSDKPFVDGPASRF. Positions 716 to 725 are enriched in basic and acidic residues; the sequence is PRYEDSDKPF. A Glycyl lysine isopeptide (Lys-Gly) (interchain with G-Cter in SUMO2) cross-link involves residue lysine 723. At serine 777 the chain carries Phosphoserine. Threonine 785 is subject to Phosphothreonine. Phosphoserine is present on serine 794. Arginine 805, arginine 820, and arginine 833 each carry asymmetric dimethylarginine. Residue serine 851 is modified to Phosphoserine. Positions 921 to 940 are disordered; it reads HGPSGAAIRFDGPHGQPGGG. Arginine 929, arginine 944, arginine 957, arginine 982, arginine 995, arginine 1008, arginine 1092, and arginine 1103 each carry asymmetric dimethylarginine. A Glycyl lysine isopeptide (Lys-Gly) (interchain with G-Cter in SUMO2) cross-link involves residue lysine 1276. The tract at residues 1286-1313 is disordered; it reads DSATAQVTEAVAQPPPEEDEDQNEDQDV. Over residues 1301–1313 the composition is skewed to acidic residues; it reads PEEDEDQNEDQDV. Residues lysine 1417, lysine 1509, lysine 1522, and lysine 1544 each participate in a glycyl lysine isopeptide (Lys-Gly) (interchain with G-Cter in SUMO2) cross-link. The tract at residues 1516–1553 is disordered; that stretch reads CESPKVKEEQIDAPPACSEESVATPTEIKTESDTVESV.

In terms of assembly, associates with the phosphorylated CTD domain of POLR2A /RNA polymerase II. In terms of processing, phosphorylation at Ser-120 and/or Thr-121 by WNK1 weakens its association with POLR2A/RNA polymerase II, promoting transcript release from the chromatin template and mRNA export to the cytoplasm.

The protein localises to the nucleus. In terms of biological role, component of pre-mRNA cleavage complex II, which promotes transcription termination by RNA polymerase II. This Mus musculus (Mouse) protein is Pre-mRNA cleavage complex 2 protein Pcf11.